Here is a 198-residue protein sequence, read N- to C-terminus: Probable GTP-binding protein EngB (198 aa).

An EngB-type G domain is found at 27-198; the sequence is DLPEVALAGR…ESWDTILSEL (172 aa). Residues 35-42, 62-66, 80-83, 147-150, and 179-181 each bind GTP; these read GRSNVGKS, GKTQL, DVPG, TKAD, and FSS. Residues serine 42 and threonine 64 each coordinate Mg(2+).

Belongs to the TRAFAC class TrmE-Era-EngA-EngB-Septin-like GTPase superfamily. EngB GTPase family. It depends on Mg(2+) as a cofactor.

Its function is as follows. Necessary for normal cell division and for the maintenance of normal septation. This Streptococcus agalactiae serotype III (strain NEM316) protein is Probable GTP-binding protein EngB.